Here is a 475-residue protein sequence, read N- to C-terminus: Subtilisin-like protease PopC (475 aa).

Disordered regions lie at residues 1 to 27 (MKSYLLVPKESIETQARVGPRGTEQGE) and 57 to 106 (TLPG…QTGA). Positions 165–475 (NRGMSSLAER…KTGKGLAVFR (311 aa)) constitute a Peptidase S8 domain. Residues Asp201, His243, and Ser423 each act as charge relay system in the active site.

The protein belongs to the peptidase S8 family. In terms of assembly, interacts with PopD in non-starving cells.

Its subcellular location is the cytoplasm. It localises to the periplasm. The protein localises to the secreted. With respect to regulation, in non-starving cells, secretion and protease activity are inhibited by formation of a cytoplasmic complex with PopD. In response to starvation, PopD is degraded in a RelA- and FtsH(D)-dependent manner, thereby releasing pre-formed PopC for secretion. Secreted and active during starvation, and rapidly degraded upon secretion. Secretion is significantly and reversibly reduced by carbonyl cyanide m-chlorophenyl hydrazine (CCCP), which dissipates or reduces the proton motive force (PMF), and by nigericin, which affects the pH gradient. In terms of biological role, required for fruiting body formation, a multicellular developmental program that is induced in response to starvation. Acts as a subtilisin-like protease that directly cleaves the CsgA precursor protein (p25) on the cell surface to generate the intercellular C-signal protein (p17) in starving cells. Preferentially acts in cis, i.e. PopC secreted by a cell only cleaves p25 on that cell. May also be important for processing of other protein(s) that are important for development. This chain is Subtilisin-like protease PopC, found in Myxococcus xanthus (strain DK1622).